The following is a 366-amino-acid chain: NADH-quinone oxidoreductase subunit D (366 aa).

It belongs to the complex I 49 kDa subunit family. As to quaternary structure, NDH-1 is composed of 14 different subunits. Subunits NuoB, C, D, E, F, and G constitute the peripheral sector of the complex.

Its subcellular location is the cell membrane. The enzyme catalyses a quinone + NADH + 5 H(+)(in) = a quinol + NAD(+) + 4 H(+)(out). Functionally, NDH-1 shuttles electrons from NADH, via FMN and iron-sulfur (Fe-S) centers, to quinones in the respiratory chain. The immediate electron acceptor for the enzyme in this species is believed to be a menaquinone. Couples the redox reaction to proton translocation (for every two electrons transferred, four hydrogen ions are translocated across the cytoplasmic membrane), and thus conserves the redox energy in a proton gradient. In Bacillus cereus (strain ZK / E33L), this protein is NADH-quinone oxidoreductase subunit D.